Consider the following 290-residue polypeptide: S-methyl-5'-thioadenosine phosphorylase (290 aa).

Phosphate-binding positions include serine 11, 53–54 (RH), and 86–87 (SA). Methionine 184 is a binding site for substrate. Position 185 (threonine 185) interacts with phosphate. Residue 208-210 (DYD) coordinates substrate.

It belongs to the PNP/MTAP phosphorylase family. MTAP subfamily. In terms of assembly, homohexamer. Dimer of a homotrimer.

It carries out the reaction S-methyl-5'-thioadenosine + phosphate = 5-(methylsulfanyl)-alpha-D-ribose 1-phosphate + adenine. It functions in the pathway amino-acid biosynthesis; L-methionine biosynthesis via salvage pathway; S-methyl-5-thio-alpha-D-ribose 1-phosphate from S-methyl-5'-thioadenosine (phosphorylase route): step 1/1. In terms of biological role, catalyzes the reversible phosphorylation of S-methyl-5'-thioadenosine (MTA) to adenine and 5-methylthioribose-1-phosphate. Involved in the breakdown of MTA, a major by-product of polyamine biosynthesis. Responsible for the first step in the methionine salvage pathway after MTA has been generated from S-adenosylmethionine. Has broad substrate specificity with 6-aminopurine nucleosides as preferred substrates. The chain is S-methyl-5'-thioadenosine phosphorylase from Cereibacter sphaeroides (strain ATCC 17023 / DSM 158 / JCM 6121 / CCUG 31486 / LMG 2827 / NBRC 12203 / NCIMB 8253 / ATH 2.4.1.) (Rhodobacter sphaeroides).